The sequence spans 354 residues: Methylthioribose-1-phosphate isomerase (354 aa).

The active-site Proton donor is aspartate 246.

This sequence belongs to the eIF-2B alpha/beta/delta subunits family. MtnA subfamily.

It is found in the cytoplasm. It localises to the nucleus. It carries out the reaction 5-(methylsulfanyl)-alpha-D-ribose 1-phosphate = 5-(methylsulfanyl)-D-ribulose 1-phosphate. The protein operates within amino-acid biosynthesis; L-methionine biosynthesis via salvage pathway; L-methionine from S-methyl-5-thio-alpha-D-ribose 1-phosphate: step 1/6. Catalyzes the interconversion of methylthioribose-1-phosphate (MTR-1-P) into methylthioribulose-1-phosphate (MTRu-1-P). The chain is Methylthioribose-1-phosphate isomerase (mri1) from Xenopus laevis (African clawed frog).